A 541-amino-acid chain; its full sequence is MADEDGEGIHPAAPHRNGGGGGGGGSGLHCAGNGGGGGGGPRVVRIVKSESGYGFNVRGQVSEGGQLRSINGELYAPLQHVSAVLPGGAADRAGVRKGDRILEVNGVNVEGATHKQVVDLIRAGEKELILTVLSVPPHEADNLDPSDDSLGQSFYDYTEKQAVPISVPTYKHVEQNGEKFVVYNVYMAGRQLCSKRYREFAILHQNLKREFANFTFPRLPGKWPFSLSEQQLDARRRGLEEYLEKVCSIRVIGESDIMQEFLSESDENYNGVSDVELRVALPDGTTVTVRVKKNSTTDQVYQAIAAKVGMDSTTVNYFALFEVINHSFVRKLAPNEFPHKLYVQNYTSAVPGTCLTIRKWLFTTEEEILLNDNDLAVTYFFHQAVDDVKKGYIKAEEKSYQLQKLYEQRKMVMYLNMLRTCEGYNEIIFPHCACDSRRKGHVITAISITHFKLHACTEEGQLENQVIAFEWDEMQRWDTDEEGMAFCFEYARGEKKPRWVKIFTPYFNYMHECFERVFCELKWRKENIFQMARSQQRDVAT.

Positions 1–26 (MADEDGEGIHPAAPHRNGGGGGGGGS) are disordered. Over residues 17–26 (NGGGGGGGGS) the composition is skewed to gly residues. In terms of domain architecture, PDZ spans 43-136 (VVRIVKSESG…ELILTVLSVP (94 aa)). Phosphoserine is present on residues serine 51 and serine 62. The PX domain maps to 161–269 (QAVPISVPTY…EFLSESDENY (109 aa)). One can recognise a Ras-associating domain in the interval 273–362 (SDVELRVALP…TCLTIRKWLF (90 aa)). The FERM-like region F1 stretch occupies residues 273-362 (SDVELRVALP…TCLTIRKWLF (90 aa)). Residues 373–421 (NDLAVTYFFHQAVDDVKKGYIKAEEKSYQLQKLYEQRKMVMYLNMLRTC) form an FERM-like region F2 region. Residues 425-525 (NEIIFPHCAC…RVFCELKWRK (101 aa)) form an FERM-like region F3 region.

As to quaternary structure, core component of the SNX27-retromer, a multiprotein complex composed of SNX27, the WASH complex and the retromer complex. Interacts (via PDZ domain) with a number of target transmembrane proteins (via PDZ-binding motif): ABCC4, ADRB2, ARHGEF7, GRIA1, GRIA2, GRIN1, GRIN2A GRIN2C, KCNJ6, KCNJ9 and SLC2A1/GLUT1. Interacts (via the FERM-like regions) with the WASH complex. Interacts with SNX1. Interacts with CYTIP. Interacts with DGKZ. Interacts with MCC. Interacts (via PDZ domains) with SLC9A3; directs SLC9A3 membrane insertion from early endosomes to the plasma membrane.

The protein localises to the early endosome membrane. It localises to the cytoplasm. Its subcellular location is the cytosol. Functionally, involved in the retrograde transport from endosome to plasma membrane, a trafficking pathway that promotes the recycling of internalized transmembrane proteins. Following internalization, endocytosed transmembrane proteins are delivered to early endosomes and recycled to the plasma membrane instead of being degraded in lysosomes. SNX27 specifically binds and directs sorting of a subset of transmembrane proteins containing a PDZ-binding motif at the C-terminus: following interaction with target transmembrane proteins, associates with the retromer complex, preventing entry into the lysosomal pathway, and promotes retromer-tubule based plasma membrane recycling. SNX27 also binds with the WASH complex. Interacts with membranes containing phosphatidylinositol-3-phosphate (PtdIns(3P)). May participate in establishment of natural killer cell polarity. Recruits CYTIP to early endosomes. This Bos taurus (Bovine) protein is Sorting nexin-27 (SNX27).